We begin with the raw amino-acid sequence, 595 residues long: DNA mismatch repair protein MutL (595 aa).

Belongs to the DNA mismatch repair MutL/HexB family.

In terms of biological role, this protein is involved in the repair of mismatches in DNA. It is required for dam-dependent methyl-directed DNA mismatch repair. May act as a 'molecular matchmaker', a protein that promotes the formation of a stable complex between two or more DNA-binding proteins in an ATP-dependent manner without itself being part of a final effector complex. This chain is DNA mismatch repair protein MutL, found in Rhodopseudomonas palustris (strain ATCC BAA-98 / CGA009).